Reading from the N-terminus, the 285-residue chain is Shikimate dehydrogenase (NADP(+)) (285 aa).

Shikimate-binding positions include 20–22 and T67; that span reads SLS. K71 (proton acceptor) is an active-site residue. E83 is a binding site for NADP(+). 2 residues coordinate shikimate: N92 and D107. NADP(+) contacts are provided by residues 132–136 and L230; that span reads GAGGA. Y232 provides a ligand contact to shikimate. G253 serves as a coordination point for NADP(+).

The protein belongs to the shikimate dehydrogenase family. In terms of assembly, homodimer.

The enzyme catalyses shikimate + NADP(+) = 3-dehydroshikimate + NADPH + H(+). It participates in metabolic intermediate biosynthesis; chorismate biosynthesis; chorismate from D-erythrose 4-phosphate and phosphoenolpyruvate: step 4/7. Involved in the biosynthesis of the chorismate, which leads to the biosynthesis of aromatic amino acids. Catalyzes the reversible NADPH linked reduction of 3-dehydroshikimate (DHSA) to yield shikimate (SA). The polypeptide is Shikimate dehydrogenase (NADP(+)) (Salinibacter ruber (strain DSM 13855 / M31)).